The sequence spans 387 residues: EARP and GARP complex-interacting protein 1 (387 aa).

Methionine 1 carries the post-translational modification N-acetylmethionine. 4 WD repeats span residues 132-172, 180-222, 226-266, and 270-310; these read TAHS…SQAV, GGKG…QIYC, AHGQ…EPVK, and EHSH…SEPF. The disordered stretch occupies residues 310 to 334; it reads FGHLVDDDDISDQEDHRSEEKSKEP. The residue at position 320 (serine 320) is a Phosphoserine. Positions 322–334 are enriched in basic and acidic residues; it reads QEDHRSEEKSKEP. A WD 5 repeat occupies 345–385; that stretch reads EHEDSVYAVDWSSADPWLFASLSYDGRLVINRVPRALKYHI.

The protein belongs to the WD repeat EIPR1 family. As to quaternary structure, interacts with two multisubunit tethering complexes: EARP composed of VPS50, VPS51, VPS52 and VPS53 subunits and GARP complex composed of VPS51, VPS52, VPS53 and VPS54 subunits. Interacts with SNAP29.

Its subcellular location is the golgi apparatus. It is found in the trans-Golgi network. Its function is as follows. Acts as a component of endosomal retrieval machinery that is involved in protein transport from early endosomes to either recycling endosomes or the trans-Golgi network. Mediates the recruitment of Golgi-associated retrograde protein (GARP) complex to the trans-Golgi network and controls early endosome-to-Golgi transport of internalized protein. Promotes the recycling of internalized transferrin receptor (TFRC) to the plasma membrane through interaction with endosome-associated recycling protein (EARP) complex. Controls proper insulin distribution and secretion, and retention of cargo in mature dense core vesicles. Required for the stability of the endosome-associated retrograde protein (EARP) complex subunits and for proper localization and association of EARP with membranes. This Macaca fascicularis (Crab-eating macaque) protein is EARP and GARP complex-interacting protein 1.